We begin with the raw amino-acid sequence, 180 residues long: MSRLKKFYTEEIRKSLFEKFGYANKMQIPVLKKIVLSMGLAEAAKDKNLFQAHLEELTMISGQKPLVTKARNSIAGFKLREGQGIGAKVTLRGIRMYDFMDRFCNIVSPRIRDFRGFSNKGDGRGCYSVGLDDQQIFPEINLDRVKRTQGLNITWVTTAQTDDECTTLLELMGLRFKKAQ.

Belongs to the universal ribosomal protein uL5 family. Part of the 50S ribosomal subunit; part of the 5S rRNA/L5/L18/L25 subcomplex. Contacts the 5S rRNA and the P site tRNA. Forms a bridge to the 30S subunit in the 70S ribosome.

Functionally, this is one of the proteins that bind and probably mediate the attachment of the 5S RNA into the large ribosomal subunit, where it forms part of the central protuberance. In the 70S ribosome it contacts protein S13 of the 30S subunit (bridge B1b), connecting the 2 subunits; this bridge is implicated in subunit movement. Contacts the P site tRNA; the 5S rRNA and some of its associated proteins might help stabilize positioning of ribosome-bound tRNAs. The chain is Large ribosomal subunit protein uL5 from Chlamydia pneumoniae (Chlamydophila pneumoniae).